A 66-amino-acid polypeptide reads, in one-letter code: Large ribosomal subunit protein bL35 (66 aa).

It belongs to the bacterial ribosomal protein bL35 family.

This chain is Large ribosomal subunit protein bL35, found in Brucella melitensis biotype 1 (strain ATCC 23456 / CCUG 17765 / NCTC 10094 / 16M).